A 199-amino-acid polypeptide reads, in one-letter code: Ubiquitin-conjugating enzyme E2-22 kDa (199 aa).

In terms of domain architecture, UBC core spans 4 to 154 (MAVSRIKREF…AKHWTNAYAG (151 aa)). C92 (glycyl thioester intermediate) is an active-site residue. The UBA domain occupies 161-199 (DCDSKIQRLRDMGIDEHEARAVLSKENWNLEKATEGLFS).

It belongs to the ubiquitin-conjugating enzyme family. In terms of assembly, interacts with Rpn10. As to expression, during gastrulation, expression is highest in the invaginating posterior midgut primordium (PMG), high expression is also observed in the cephalic furrow and ventral ectodermal neurogenic region. In stage 10-11 embryos, expression is high in the pole cells present in the pocket formed by the PMG. During germ band retraction, expression appears to reinitiate in many tissues, especially the gut and nervous system. After dorsal closure, expression is detectable at low levels throughout the embryo.

It catalyses the reaction S-ubiquitinyl-[E1 ubiquitin-activating enzyme]-L-cysteine + [E2 ubiquitin-conjugating enzyme]-L-cysteine = [E1 ubiquitin-activating enzyme]-L-cysteine + S-ubiquitinyl-[E2 ubiquitin-conjugating enzyme]-L-cysteine.. Its pathway is protein modification; protein ubiquitination. Functionally, catalyzes the covalent attachment of ubiquitin to other proteins. The chain is Ubiquitin-conjugating enzyme E2-22 kDa from Drosophila melanogaster (Fruit fly).